Here is a 319-residue protein sequence, read N- to C-terminus: Ubiquinone biosynthesis protein COQ9, mitochondrial (319 aa).

Residues 1–45 (MAATVAFSGVLRRAGWRLLQLRCLPVPRCRPALAPRAFRASAMQL) constitute a mitochondrion transit peptide. The short motif at 17–32 (RLLQLRCLPVPRCRPA) is the SIFI-degron element. Residues 46–99 (RSLDQQKDQPPPSSSQQQSEAQGAEEPNPEALRSPPRYTDQGGEEEEDYESEEQ) form a disordered region. Residues 87–98 (GGEEEEDYESEE) show a composition bias toward acidic residues. The residue at position 176 (Lys176) is an N6-acetyllysine. Residue Arg245 coordinates a 1,2-diacylglycero-3-phosphoethanolamine.

Belongs to the COQ9 family. In terms of assembly, homodimer. Heterodimer; two heterodimers of COQ7:COQ9 come together on the same side of the lipid pseudo-bilayer and form a curved tetramer with a hydrophobic surface suitable for membrane interaction. These two tetramers assemble into a soluble octamer with a pseudo-bilayer of lipids captured within. Interacts with COQ7; this interaction allows ubiquinone (CoQ) isoprene intermediates presentation to COQ7 and facilitates the COQ7-mediated hydroxylase step. In response to mitochondrial stress, the precursor protein is ubiquitinated by the SIFI complex in the cytoplasm before mitochondrial import, leading to its degradation. Within the SIFI complex, UBR4 initiates ubiquitin chain that are further elongated or branched by KCMF1.

Its subcellular location is the mitochondrion. It functions in the pathway cofactor biosynthesis; ubiquinone biosynthesis. In terms of biological role, membrane-associated protein that warps the membrane surface to access and bind aromatic isoprenes with high specificity, including ubiquinone (CoQ) isoprene intermediates and presents them directly to COQ7, therefore facilitating the COQ7-mediated hydroxylase step. Participates in the biosynthesis of coenzyme Q, also named ubiquinone, an essential lipid-soluble electron transporter for aerobic cellular respiration. This chain is Ubiquinone biosynthesis protein COQ9, mitochondrial, found in Bos taurus (Bovine).